The primary structure comprises 129 residues: Follitropin subunit beta (129 aa).

A signal peptide spans 1-18 (MKTVQFCFLFCCWKAICC). Intrachain disulfides connect cysteine 21/cysteine 69, cysteine 35/cysteine 84, cysteine 38/cysteine 122, cysteine 46/cysteine 100, cysteine 50/cysteine 102, and cysteine 105/cysteine 112. N-linked (GlcNAc...) asparagine glycosylation is found at asparagine 25 and asparagine 42.

This sequence belongs to the glycoprotein hormones subunit beta family. Heterodimer. The active follitropin is a heterodimer composed of an alpha chain/CGA shared with other hormones and a unique beta chain/FSHB shown here.

It localises to the secreted. Together with the alpha chain CGA constitutes follitropin, the follicle-stimulating hormone, and provides its biological specificity to the hormone heterodimer. Binds FSHR, a G protein-coupled receptor, on target cells to activate downstream signaling pathways. Follitropin is involved in follicle development and spermatogenesis in reproductive organs. The protein is Follitropin subunit beta (FSHB) of Macaca fascicularis (Crab-eating macaque).